The primary structure comprises 413 residues: Pyruvate dehydrogenase complex subunit homolog DDB_G0271564, mitochondrial (413 aa).

A mitochondrion-targeting transit peptide spans 1 to 19 (MNRILKQVSNTKGKGIRFY). The Peripheral subunit-binding (PSBD) domain maps to 29 to 67 (YMFPSVRRLLVEYGINSSKEVTATGPQNRLLKGDVLAYI).

Belongs to the 2-oxoacid dehydrogenase family.

Its subcellular location is the mitochondrion. In terms of biological role, the pyruvate dehydrogenase complex catalyzes the overall conversion of pyruvate to acetyl-CoA and CO(2). It contains multiple copies of three enzymatic components: pyruvate dehydrogenase (E1), dihydrolipoamide acetyltransferase (E2) and lipoamide dehydrogenase (E3). This chain is Pyruvate dehydrogenase complex subunit homolog DDB_G0271564, mitochondrial (pdhX), found in Dictyostelium discoideum (Social amoeba).